Consider the following 185-residue polypeptide: Calcium-binding protein CML37 (185 aa).

Residues 1–12 show a composition bias toward polar residues; the sequence is MTLAKNQKSSLS. The tract at residues 1–45 is disordered; it reads MTLAKNQKSSLSRLYKKVSSKRSESSRNLEDESRTSSNSSGSSSL. The span at 21-34 shows a compositional bias: basic and acidic residues; it reads KRSESSRNLEDESR. The span at 35 to 44 shows a compositional bias: low complexity; the sequence is TSSNSSGSSS. 4 consecutive EF-hand domains span residues 45–80, 81–116, 119–154, and 155–185; these read LNVNELRTVFDYMDANSDGKISGEELQSCVSLLGGA, LSSREVEEVVKTSDVDGDGFIDFEEFLKLMEGEDGS, ERRKELKEAFGMYVMEGEEFITAASLRRTLSRLGES, and CTVDACKVMIRGFDQNDDGVLSFDEFVLMMR. Ca(2+)-binding residues include Asp-58, Asn-60, Asp-62, Lys-64, Glu-69, Asp-94, Asp-96, Asp-98, and Glu-105. Ca(2+) contacts are provided by Asp-168, Asn-170, Asp-172, and Glu-179.

In terms of assembly, binds to ABCG36. Expressed in cotyledons, stipule, young leaves and at the hypocotyl-root junction. In mature root, expressed in the stele, cortex, emerging lateral root, root tip and root cap. In mature plant, expressed at the base of cauline and floral branches, and in rosette and cauline leaves. Expressed from stage 9 to 14 of flower development in anthers. At stage 15, expressed in carpel, sepals, petals and pollen until dehiscence. Expressed in developing seeds and young siliques.

In terms of biological role, potential calcium sensor that binds calcium in vitro. This chain is Calcium-binding protein CML37, found in Arabidopsis thaliana (Mouse-ear cress).